Here is a 77-residue protein sequence, read N- to C-terminus: Large ribosomal subunit protein bL28 (77 aa).

It belongs to the bacterial ribosomal protein bL28 family.

This Cupriavidus necator (strain ATCC 17699 / DSM 428 / KCTC 22496 / NCIMB 10442 / H16 / Stanier 337) (Ralstonia eutropha) protein is Large ribosomal subunit protein bL28.